A 102-amino-acid chain; its full sequence is Small ribosomal subunit protein uS10 (102 aa).

The protein belongs to the universal ribosomal protein uS10 family. In terms of assembly, part of the 30S ribosomal subunit.

Its function is as follows. Involved in the binding of tRNA to the ribosomes. This Methylobacillus flagellatus (strain ATCC 51484 / DSM 6875 / VKM B-1610 / KT) protein is Small ribosomal subunit protein uS10.